A 216-amino-acid polypeptide reads, in one-letter code: MRDQEFWHSKWASNQIGFHLEDVNPLLPAYWHHANPKREDKVLVPLCGKSEDLVWLATKHDSVEGVELSQIAVRSFFAEHFYTPTVTPISGMHELYQFDELSIYTGDFFTAPVSQADIVYDRAALVALPQDMREEYVARLKQLLNPGGRILLVTLNYPQEEMAGPPFSVPLEEIQQLFAGYKVTCLNVDQADEHHPKIAKKGLSRFSEEVYLIEAQ.

Positions 11, 46, 67, and 122 each coordinate S-adenosyl-L-methionine.

This sequence belongs to the class I-like SAM-binding methyltransferase superfamily. TPMT family.

It is found in the cytoplasm. It carries out the reaction S-adenosyl-L-methionine + a thiopurine = S-adenosyl-L-homocysteine + a thiopurine S-methylether.. This Vibrio parahaemolyticus serotype O3:K6 (strain RIMD 2210633) protein is Thiopurine S-methyltransferase.